The primary structure comprises 305 residues: Probable cell division protein WhiA (305 aa).

The H-T-H motif DNA-binding region spans 272-305 (SIQQLADSLTVPITKSGVNHRLRKINKIADELTD).

The protein belongs to the WhiA family.

Involved in cell division and chromosome segregation. This chain is Probable cell division protein WhiA, found in Streptococcus suis (strain 98HAH33).